The following is a 299-amino-acid chain: Pyridoxal 5'-phosphate synthase subunit PdxS (299 aa).

Aspartate 24 lines the D-ribose 5-phosphate pocket. The Schiff-base intermediate with D-ribose 5-phosphate role is filled by lysine 81. Glycine 153 contributes to the D-ribose 5-phosphate binding site. Arginine 165 serves as a coordination point for D-glyceraldehyde 3-phosphate. D-ribose 5-phosphate-binding positions include glycine 219 and 240 to 241 (GS).

The protein belongs to the PdxS/SNZ family. As to quaternary structure, in the presence of PdxT, forms a dodecamer of heterodimers.

It carries out the reaction aldehydo-D-ribose 5-phosphate + D-glyceraldehyde 3-phosphate + L-glutamine = pyridoxal 5'-phosphate + L-glutamate + phosphate + 3 H2O + H(+). It functions in the pathway cofactor biosynthesis; pyridoxal 5'-phosphate biosynthesis. Functionally, catalyzes the formation of pyridoxal 5'-phosphate from ribose 5-phosphate (RBP), glyceraldehyde 3-phosphate (G3P) and ammonia. The ammonia is provided by the PdxT subunit. Can also use ribulose 5-phosphate and dihydroxyacetone phosphate as substrates, resulting from enzyme-catalyzed isomerization of RBP and G3P, respectively. The chain is Pyridoxal 5'-phosphate synthase subunit PdxS from Methanococcus maripaludis (strain C7 / ATCC BAA-1331).